Here is a 209-residue protein sequence, read N- to C-terminus: Uracil phosphoribosyltransferase (209 aa).

Residues Arg-79, Arg-104, and 131–139 (DPMLATGGS) contribute to the 5-phospho-alpha-D-ribose 1-diphosphate site. Uracil contacts are provided by residues Ile-194 and 199–201 (GDA). Residue Asp-200 coordinates 5-phospho-alpha-D-ribose 1-diphosphate.

This sequence belongs to the UPRTase family. The cofactor is Mg(2+).

It carries out the reaction UMP + diphosphate = 5-phospho-alpha-D-ribose 1-diphosphate + uracil. It participates in pyrimidine metabolism; UMP biosynthesis via salvage pathway; UMP from uracil: step 1/1. Its activity is regulated as follows. Allosterically activated by GTP. In terms of biological role, catalyzes the conversion of uracil and 5-phospho-alpha-D-ribose 1-diphosphate (PRPP) to UMP and diphosphate. The chain is Uracil phosphoribosyltransferase from Chromohalobacter salexigens (strain ATCC BAA-138 / DSM 3043 / CIP 106854 / NCIMB 13768 / 1H11).